A 278-amino-acid chain; its full sequence is Phosphoenolpyruvate carboxylase kinase 2 (278 aa).

A Protein kinase domain is found at 11 to 269 (YQLCDEIGRG…AEDALRHSWM (259 aa)). ATP contacts are provided by residues 17 to 25 (IGRGRFGTI) and lysine 40. Residue aspartate 137 is the Proton acceptor of the active site.

Belongs to the protein kinase superfamily. Ser/Thr protein kinase family. Expressed in flowers and roots, and at lower levels in cauline leaves. Barely detectable in rosette leaves and stems.

It carries out the reaction L-seryl-[protein] + ATP = O-phospho-L-seryl-[protein] + ADP + H(+). The catalysed reaction is L-threonyl-[protein] + ATP = O-phospho-L-threonyl-[protein] + ADP + H(+). In terms of biological role, calcium-independent kinase involved in light-dependent phosphoenolpyruvate carboxylase phosphorylation. The chain is Phosphoenolpyruvate carboxylase kinase 2 (PPCK2) from Arabidopsis thaliana (Mouse-ear cress).